The sequence spans 83 residues: Large ribosomal subunit protein bL27 (83 aa).

A disordered region spans residues 1 to 25; it reads MAHKKGQGASRNGRDSESKRLGLKV.

It belongs to the bacterial ribosomal protein bL27 family.

This is Large ribosomal subunit protein bL27 from Chlamydia trachomatis serovar L2 (strain ATCC VR-902B / DSM 19102 / 434/Bu).